Here is a 293-residue protein sequence, read N- to C-terminus: Elongation factor Ts (293 aa).

An involved in Mg(2+) ion dislocation from EF-Tu region spans residues 79–82; sequence TDFV.

It belongs to the EF-Ts family.

Its subcellular location is the cytoplasm. Associates with the EF-Tu.GDP complex and induces the exchange of GDP to GTP. It remains bound to the aminoacyl-tRNA.EF-Tu.GTP complex up to the GTP hydrolysis stage on the ribosome. The sequence is that of Elongation factor Ts from Macrococcus caseolyticus (strain JCSC5402) (Macrococcoides caseolyticum).